Here is a 477-residue protein sequence, read N- to C-terminus: Bifunctional protein HldE (477 aa).

Residues 1–318 form a ribokinase region; it reads MQIQLPMFQN…RRAVQQEQGA (318 aa). Residue 195-198 participates in ATP binding; it reads NLSE. Aspartate 264 is a catalytic residue. A cytidylyltransferase region spans residues 344 to 477; that stretch reads FTNGCFDIIH…VEKIRKDQVK (134 aa).

The protein in the N-terminal section; belongs to the carbohydrate kinase PfkB family. It in the C-terminal section; belongs to the cytidylyltransferase family. As to quaternary structure, homodimer.

It carries out the reaction D-glycero-beta-D-manno-heptose 7-phosphate + ATP = D-glycero-beta-D-manno-heptose 1,7-bisphosphate + ADP + H(+). It catalyses the reaction D-glycero-beta-D-manno-heptose 1-phosphate + ATP + H(+) = ADP-D-glycero-beta-D-manno-heptose + diphosphate. The protein operates within nucleotide-sugar biosynthesis; ADP-L-glycero-beta-D-manno-heptose biosynthesis; ADP-L-glycero-beta-D-manno-heptose from D-glycero-beta-D-manno-heptose 7-phosphate: step 1/4. Its pathway is nucleotide-sugar biosynthesis; ADP-L-glycero-beta-D-manno-heptose biosynthesis; ADP-L-glycero-beta-D-manno-heptose from D-glycero-beta-D-manno-heptose 7-phosphate: step 3/4. In terms of biological role, catalyzes the phosphorylation of D-glycero-D-manno-heptose 7-phosphate at the C-1 position to selectively form D-glycero-beta-D-manno-heptose-1,7-bisphosphate. Catalyzes the ADP transfer from ATP to D-glycero-beta-D-manno-heptose 1-phosphate, yielding ADP-D-glycero-beta-D-manno-heptose. This is Bifunctional protein HldE from Hahella chejuensis (strain KCTC 2396).